A 326-amino-acid chain; its full sequence is DNA-directed RNA polymerase subunit alpha (326 aa).

The alpha N-terminal domain (alpha-NTD) stretch occupies residues 1-231; the sequence is MQTALLKPKI…DQLSVFAALE (231 aa). The interval 247-326 is alpha C-terminal domain (alpha-CTD); that stretch reads IDPILLRPVD…ENWPPAGLEK (80 aa).

Belongs to the RNA polymerase alpha chain family. As to quaternary structure, homodimer. The RNAP catalytic core consists of 2 alpha, 1 beta, 1 beta' and 1 omega subunit. When a sigma factor is associated with the core the holoenzyme is formed, which can initiate transcription.

The catalysed reaction is RNA(n) + a ribonucleoside 5'-triphosphate = RNA(n+1) + diphosphate. Its function is as follows. DNA-dependent RNA polymerase catalyzes the transcription of DNA into RNA using the four ribonucleoside triphosphates as substrates. The polypeptide is DNA-directed RNA polymerase subunit alpha (Cupriavidus metallidurans (strain ATCC 43123 / DSM 2839 / NBRC 102507 / CH34) (Ralstonia metallidurans)).